The following is an 86-amino-acid chain: uncharacterized protein (86 aa).

This is an uncharacterized protein from Saccharomyces cerevisiae (strain ATCC 204508 / S288c) (Baker's yeast).